The following is a 501-amino-acid chain: Probable cytosol aminopeptidase (501 aa).

Mn(2+) is bound by residues K268 and D273. K280 is an active-site residue. Positions 291, 350, and 352 each coordinate Mn(2+). Residue R354 is part of the active site.

This sequence belongs to the peptidase M17 family. It depends on Mn(2+) as a cofactor.

The protein resides in the cytoplasm. The enzyme catalyses Release of an N-terminal amino acid, Xaa-|-Yaa-, in which Xaa is preferably Leu, but may be other amino acids including Pro although not Arg or Lys, and Yaa may be Pro. Amino acid amides and methyl esters are also readily hydrolyzed, but rates on arylamides are exceedingly low.. The catalysed reaction is Release of an N-terminal amino acid, preferentially leucine, but not glutamic or aspartic acids.. Functionally, presumably involved in the processing and regular turnover of intracellular proteins. Catalyzes the removal of unsubstituted N-terminal amino acids from various peptides. This chain is Probable cytosol aminopeptidase, found in Nitrosococcus oceani (strain ATCC 19707 / BCRC 17464 / JCM 30415 / NCIMB 11848 / C-107).